A 181-amino-acid polypeptide reads, in one-letter code: Cyclic AMP-dependent transcription factor ATF-3 (181 aa).

A disordered region spans residues 76-96 (VTKSEVAPEEDERKRRRRERN). Residue Lys78 forms a Glycyl lysine isopeptide (Lys-Gly) (interchain with G-Cter in SUMO2) linkage. Positions 86-149 (DERKRRRRER…QHLIYMLNLH (64 aa)) constitute a bZIP domain. The interval 88–110 (RKRRRRERNKIAAAKCRNKKKEK) is basic motif. A leucine-zipper region spans residues 114 to 142 (LQKESEKLESVNAELKAQIEELKNEKQHL). Thr162 is subject to Phosphothreonine. Residue Lys175 forms a Glycyl lysine isopeptide (Lys-Gly) (interchain with G-Cter in SUMO2) linkage.

Belongs to the bZIP family. ATF subfamily. As to quaternary structure, ATF3 alone can bind DNA, but it preferentially forms heteromeric complexes with JUN and JUNB and does not interact with FOS. As to expression, expressed in tissues containing skeletal muscle or smooth muscle. Expressed in cutaneous and muscular sensory neurons.

The protein resides in the nucleus. Functionally, this protein binds the cAMP response element (CRE) (consensus: 5'-GTGACGT[AC][AG]-3'), a sequence present in many viral and cellular promoters. Represses transcription from promoters with ATF sites. It may repress transcription by stabilizing the binding of inhibitory cofactors at the promoter. This is Cyclic AMP-dependent transcription factor ATF-3 (Atf3) from Rattus norvegicus (Rat).